Consider the following 430-residue polypeptide: Tol-Pal system protein TolB (430 aa).

The signal sequence occupies residues 1–21 (MRRFVTLLIALLCLSATAVQA).

Belongs to the TolB family. In terms of assembly, the Tol-Pal system is composed of five core proteins: the inner membrane proteins TolA, TolQ and TolR, the periplasmic protein TolB and the outer membrane protein Pal. They form a network linking the inner and outer membranes and the peptidoglycan layer.

The protein localises to the periplasm. Its function is as follows. Part of the Tol-Pal system, which plays a role in outer membrane invagination during cell division and is important for maintaining outer membrane integrity. This is Tol-Pal system protein TolB from Syntrophotalea carbinolica (strain DSM 2380 / NBRC 103641 / GraBd1) (Pelobacter carbinolicus).